Consider the following 191-residue polypeptide: MKEIVLASSSPRRRDLLKQLGLTFRIMTAGVDETPPGGLTPAEMVEVLAGRKAAAVAGMLEDALVIGADTVVVLNGRVLGKPADREEAAGMLRQLQGTDHTVYTGVAVMDAASKKMQVAHEKTRVFFKSLDEHEIRRYVATGEPMGKAGAYAVQGRAAAFIKGLEGCYTNVVGLPLARLADMLKKFGYNVL.

Residue Asp-69 is the Proton acceptor of the active site.

It belongs to the Maf family. YhdE subfamily. A divalent metal cation is required as a cofactor.

Its subcellular location is the cytoplasm. The catalysed reaction is dTTP + H2O = dTMP + diphosphate + H(+). It carries out the reaction UTP + H2O = UMP + diphosphate + H(+). Functionally, nucleoside triphosphate pyrophosphatase that hydrolyzes dTTP and UTP. May have a dual role in cell division arrest and in preventing the incorporation of modified nucleotides into cellular nucleic acids. The chain is dTTP/UTP pyrophosphatase from Pelotomaculum thermopropionicum (strain DSM 13744 / JCM 10971 / SI).